Reading from the N-terminus, the 788-residue chain is 5-methyltetrahydropteroyltriglutamate--homocysteine methyltransferase (788 aa).

5-methyltetrahydropteroyltri-L-glutamate contacts are provided by residues 24 to 27 and lysine 140; that span reads RELK. L-homocysteine contacts are provided by residues 463–465 and glutamate 516; that span reads IGS. L-methionine-binding positions include 463-465 and glutamate 516; that span reads IGS. 5-methyltetrahydropteroyltri-L-glutamate-binding positions include 547-548 and tryptophan 593; that span reads RC. Position 631 (aspartate 631) interacts with L-homocysteine. Aspartate 631 contributes to the L-methionine binding site. Glutamate 637 contributes to the 5-methyltetrahydropteroyltri-L-glutamate binding site. Zn(2+) contacts are provided by histidine 673, cysteine 675, and glutamate 697. The Proton donor role is filled by histidine 726. Cysteine 758 is a binding site for Zn(2+).

It belongs to the vitamin-B12 independent methionine synthase family. The cofactor is Zn(2+).

It catalyses the reaction 5-methyltetrahydropteroyltri-L-glutamate + L-homocysteine = tetrahydropteroyltri-L-glutamate + L-methionine. It functions in the pathway amino-acid biosynthesis; L-methionine biosynthesis via de novo pathway; L-methionine from L-homocysteine (MetE route): step 1/1. Catalyzes the transfer of a methyl group from 5-methyltetrahydrofolate to homocysteine resulting in methionine formation. The chain is 5-methyltetrahydropteroyltriglutamate--homocysteine methyltransferase from Rhodopseudomonas palustris (strain TIE-1).